The sequence spans 808 residues: uncharacterized protein (808 aa).

35–42 (GPNNVGKT) lines the ATP pocket.

This is an uncharacterized protein from Methanocaldococcus jannaschii (strain ATCC 43067 / DSM 2661 / JAL-1 / JCM 10045 / NBRC 100440) (Methanococcus jannaschii).